We begin with the raw amino-acid sequence, 159 residues long: Glucosamine 6-phosphate N-acetyltransferase (159 aa).

Ser-2 carries the post-translational modification N-acetylserine. D-glucosamine 6-phosphate contacts are provided by residues Thr-28, 86 to 89, and 98 to 100; these read KIIH and EDI. An N-acetyltransferase domain is found at 28–159; it reads TTVGTITPES…NAGVEMQIRK (132 aa). Acetyl-CoA-binding positions include 100–102 and 108–113; these read IAV and GQGLGK. Residues 129 to 130 and Asp-134 contribute to the D-glucosamine 6-phosphate site; that span reads YK. Position 143–145 (143–145) interacts with acetyl-CoA; the sequence is YEK. Arg-158 contacts D-glucosamine 6-phosphate.

Belongs to the acetyltransferase family. GNA1 subfamily. In terms of assembly, homodimer.

It carries out the reaction D-glucosamine 6-phosphate + acetyl-CoA = N-acetyl-D-glucosamine 6-phosphate + CoA + H(+). It participates in nucleotide-sugar biosynthesis; UDP-N-acetyl-alpha-D-glucosamine biosynthesis; N-acetyl-alpha-D-glucosamine 1-phosphate from alpha-D-glucosamine 6-phosphate (route I): step 1/2. The chain is Glucosamine 6-phosphate N-acetyltransferase (GNA1) from Saccharomyces cerevisiae (strain ATCC 204508 / S288c) (Baker's yeast).